The primary structure comprises 139 residues: Histone H2B (139 aa).

Residues 1–10 show a composition bias toward basic and acidic residues; it reads MAPKAAEKKP. The segment at 1-47 is disordered; sequence MAPKAAEKKPSTGGKAPAGGKAPAEKKEAGKKTAASGEKKKRTKARK. Residues Lys8 and Lys9 each carry the N6-acetyllysine; alternate modification. Glycyl lysine isopeptide (Lys-Gly) (interchain with G-Cter in SUMO); alternate cross-links involve residues Lys8 and Lys9. Low complexity predominate over residues 11–22; sequence STGGKAPAGGKA. Lys15 is subject to N6-acetyllysine. The residue at position 26 (Lys26) is an N6-acetyllysine; alternate. Lys26 participates in a covalent cross-link: Glycyl lysine isopeptide (Lys-Gly) (interchain with G-Cter in SUMO); alternate. Lys27 participates in a covalent cross-link: Glycyl lysine isopeptide (Lys-Gly) (interchain with G-Cter in SUMO). A Glycyl lysine isopeptide (Lys-Gly) (interchain with G-Cter in ubiquitin) cross-link involves residue Lys133.

This sequence belongs to the histone H2B family. As to quaternary structure, the nucleosome is a histone octamer containing two molecules each of H2A, H2B, H3 and H4 assembled in one H3-H4 heterotetramer and two H2A-H2B heterodimers. The octamer wraps approximately 147 bp of DNA. Monoubiquitinated by the UBC2-BRE1 complex to form H2BK123ub1. H2BK123ub1 gives a specific tag for epigenetic transcriptional activation and is also prerequisite for H3K4me and H3K79me formation. H2BK123ub1 also modulates the formation of double-strand breaks during meiosis and is a prerequisite for DNA-damage checkpoint activation. Post-translationally, acetylated by GCN5 to form H2BK11ac and H2BK16ac. H2BK16ac can also be formed by ESA1. Acetylation of N-terminal lysines and particularly formation of H2BK11acK16ac has a positive effect on transcription. In terms of processing, sumoylation to form H2BK6su or H2BK7su, and probably also H2BK16su or H2BK17su, occurs preferentially near the telomeres and represses gene transcription.

The protein resides in the nucleus. Its subcellular location is the chromosome. In terms of biological role, core component of nucleosome. Nucleosomes wrap and compact DNA into chromatin, limiting DNA accessibility to the cellular machineries which require DNA as a template. Histones thereby play a central role in transcription regulation, DNA repair, DNA replication and chromosomal stability. DNA accessibility is regulated via a complex set of post-translational modifications of histones, also called histone code, and nucleosome remodeling. In Coccidioides immitis (strain RS) (Valley fever fungus), this protein is Histone H2B (HTB1).